The chain runs to 199 residues: Riboflavin synthase (199 aa).

Lumazine-binding repeat units follow at residues 1-95 (MFSG…IGGH) and 96-188 (FVSG…VDTI). Residues 4 to 6 (GII), 46 to 48 (CLT), 60 to 65 (DVTEET), 99 to 101 (GHV), lysine 130, 139 to 141 (SLT), and 153 to 158 (SLIPET) each bind 2,4-dihydroxypteridine.

As to quaternary structure, homotrimer.

It catalyses the reaction 2 6,7-dimethyl-8-(1-D-ribityl)lumazine + H(+) = 5-amino-6-(D-ribitylamino)uracil + riboflavin. Its pathway is cofactor biosynthesis; riboflavin biosynthesis; riboflavin from 2-hydroxy-3-oxobutyl phosphate and 5-amino-6-(D-ribitylamino)uracil: step 2/2. Functionally, catalyzes the dismutation of two molecules of 6,7-dimethyl-8-ribityllumazine, resulting in the formation of riboflavin and 5-amino-6-(D-ribitylamino)uracil. This chain is Riboflavin synthase (ribE), found in Chlamydia trachomatis serovar D (strain ATCC VR-885 / DSM 19411 / UW-3/Cx).